Consider the following 266-residue polypeptide: Proline-rich protein 23A (266 aa).

Residues 1-18 show a composition bias toward low complexity; sequence MGSRPRSPSAFPAPWWGQ. Disordered stretches follow at residues 1 to 47 and 197 to 266; these read MGSR…SLED and EPCA…LFQE. Over residues 227-238 the composition is skewed to pro residues; sequence PSSPLQPLPPSP. The segment covering 255–266 has biased composition (basic residues); that stretch reads PPCKARRRLFQE.

It belongs to the PRR23 family.

This is Proline-rich protein 23A (PRR23A) from Homo sapiens (Human).